A 589-amino-acid polypeptide reads, in one-letter code: Type I restriction enzyme EcoAI specificity subunit (589 aa).

The protein belongs to the type-I restriction system S methylase family. The type I restriction/modification system is composed of three polypeptides R, M and S. The restriction enzyme has stoichiometry R(2)M(2)S(1) while the methyltransferase is M(2)S(1).

The specificity (S) subunit of a type I restriction enzyme; this subunit dictates DNA sequence specificity. The M and S subunits together form a methyltransferase (MTase) that methylates A-2 on the top strand and A-3 on the bottom strand of the sequence 5'-GAGN(7)GTCA-3'. In the presence of the R subunit the complex can also act as an endonuclease, binding to the same target sequence but cutting the DNA some distance from this site. Whether the DNA is cut or modified depends on the methylation state of the target sequence. When the target site is unmodified, the DNA is cut. When the target site is hemimethylated, the complex acts as a maintenance MTase modifying the DNA so that both strands become methylated. After locating a non-methylated recognition site, the enzyme complex serves as a molecular motor that translocates DNA in an ATP-dependent manner until a collision occurs that triggers cleavage. This Escherichia coli protein is Type I restriction enzyme EcoAI specificity subunit.